Consider the following 405-residue polypeptide: MVARWVKGSEDAPLALQKIPDLQSGPRSLRMEAIHIGMSSAPLVKHSNGVGLKAHRPRVMSKSGHSNVRIDKVDGIYLLYLQDLWTTVIDMKWRYKLTLFAATFVMTWFLFGVVYYAIAFIHGDLELGESNSNHTPCIMKVDSLTGAFLFSLESQTTIGYGVRSITEECPHAIFLLVAQLVITTLIEIFITGTFLAKIARPKKRAETIKFSHCAVISKQNGKLCLVIQVANMRKSLLIQCQLSGKLLQTHVTKEGERILLNQATVKFHVDSSSESPFLILPMTFYHVLDETSPLRDLTPQNLKEKEFELVVLLNATVESTSAVCQSRTSYIPEEIYWGFEFVPVVSLSKNGKYVADFSQFEQIRKSPDCTFYCADSEKQKLEEQYRQEDQRERELRSLLLQQSNV.

Residues 1 to 90 are Cytoplasmic-facing; that stretch reads MVARWVKGSE…LQDLWTTVID (90 aa). The helical transmembrane segment at 91-117 threads the bilayer; sequence MKWRYKLTLFAATFVMTWFLFGVVYYA. Over 118-143 the chain is Extracellular; it reads IAFIHGDLELGESNSNHTPCIMKVDS. Residues 144–160 constitute an intramembrane region (helical; Pore-forming); it reads LTGAFLFSLESQTTIGY. The Selectivity filter motif lies at 157-162; that stretch reads TIGYGV. Topologically, residues 161–169 are extracellular; it reads GVRSITEEC. A helical transmembrane segment spans residues 170 to 195; it reads PHAIFLLVAQLVITTLIEIFITGTFL. The Cytoplasmic portion of the chain corresponds to 196 to 405; that stretch reads AKIARPKKRA…RSLLLQQSNV (210 aa).

The protein belongs to the inward rectifier-type potassium channel (TC 1.A.2.1) family. KCNJ15 subfamily. As to quaternary structure, can form heteromultimeric channels with Kir5.1/KCNJ16. Interacts with PATJ.

The protein resides in the membrane. It is found in the cell membrane. It catalyses the reaction K(+)(in) = K(+)(out). Channel activity is regulated by variations of cytosolic pH; reversibly inhibited by acidic pH values. Inhibited by Ba(2+) and Cs(+) in a voltage-dependent manner. Its function is as follows. Inward rectifier potassium channels are characterized by a greater tendency to allow potassium to flow into the cell rather than out of it. Their voltage dependence is regulated by the concentration of extracellular potassium; as external potassium is raised, the voltage range of the channel opening shifts to more positive voltages. The inward rectification is mainly due to the blockage of outward current by internal magnesium. This Rattus norvegicus (Rat) protein is ATP-sensitive inward rectifier potassium channel 15 (Kcnj15).